The primary structure comprises 100 residues: CCAAT/enhancer-binding protein homolog 2 (100 aa).

Disordered stretches follow at residues 1 to 60 (MSGN…ETLE) and 79 to 100 (AYAK…SSAV). In terms of domain architecture, bZIP spans 17–80 (EDDYSTKRKR…SFLKEMFMAY (64 aa)). Positions 23-48 (KRKRNNEAVNRTRQKKRQEENDTAEK) are basic motif. Residues 24-83 (RKRNNEAVNRTRQKKRQEENDTAEKVDELKKENETLERKVEQLQKELSFLKEMFMAYAKN) are a coiled coil. Residues 39-60 (RQEENDTAEKVDELKKENETLE) show a composition bias toward basic and acidic residues. A leucine-zipper region spans residues 52–73 (LKKENETLERKVEQLQKELSFL). The segment covering 88-100 (GPPPPPPPSSSAV) has biased composition (pro residues).

The protein belongs to the bZIP family. C/EBP subfamily. Interacts with transcription factor zip-11. Expressed broadly in somatic tissues including the intestine.

The protein resides in the nucleus. Transcription factor that binds to the promoter and the enhancer regions of target genes. Regulates expression of genes involved in fat metabolism, including ech-1.1 and fat-5. Has a protective role in response to infection by the Gram-negative bacterium P.aeruginosa. Required for the activation of infection response gene irg-1 following P.aeruginosa infection. Required to prevent P.aeruginosa ToxA-mediated lethality. May also function in concert with transcription factor zip-11 to mediate immune responses, independently of the pmk-1/p38 MAPK pathway. May act together with the bZIP transcription factor, zip-2. The sequence is that of CCAAT/enhancer-binding protein homolog 2 from Caenorhabditis elegans.